The sequence spans 414 residues: Esterase FrsA (414 aa).

Belongs to the FrsA family.

The enzyme catalyses a carboxylic ester + H2O = an alcohol + a carboxylate + H(+). Functionally, catalyzes the hydrolysis of esters. This chain is Esterase FrsA, found in Citrobacter koseri (strain ATCC BAA-895 / CDC 4225-83 / SGSC4696).